We begin with the raw amino-acid sequence, 208 residues long: Calaxin (208 aa).

EF-hand domains are found at residues T64 to G99, T100 to K135, and G145 to L180. Ca(2+)-binding residues include D77, D79, D81, D113, N115, D117, Y119, E124, D158, D160, D162, K164, and D169.

Component of the outer dynein arm-docking complex along with ODAD1, ODAD2, ODAD3 and ODAD4.

The protein resides in the cytoplasm. Its subcellular location is the cytoskeleton. The protein localises to the cilium axoneme. It localises to the cell projection. It is found in the cilium. The protein resides in the flagellum. Its function is as follows. Component of the outer dynein arm-docking complex (ODA-DC) that mediates outer dynein arms (ODA) binding onto the doublet microtubule. Seems to regulate the assembly of both ODAs and their axonemal docking complex onto ciliary microtubules. Regulates ciliary and flagellar motility and is required for cilia-driven determination of body laterality. This chain is Calaxin (clxn), found in Xenopus laevis (African clawed frog).